The primary structure comprises 369 residues: 3-dehydroquinate synthase (369 aa).

Residues 110 to 114 (GVIGD), 134 to 135 (TT), Lys-147, Lys-156, and 174 to 177 (TLKT) each bind NAD(+). 3 residues coordinate Zn(2+): Glu-189, His-254, and His-271.

It belongs to the sugar phosphate cyclases superfamily. Dehydroquinate synthase family. Co(2+) serves as cofactor. Requires Zn(2+) as cofactor. NAD(+) is required as a cofactor.

Its subcellular location is the cytoplasm. It carries out the reaction 7-phospho-2-dehydro-3-deoxy-D-arabino-heptonate = 3-dehydroquinate + phosphate. Its pathway is metabolic intermediate biosynthesis; chorismate biosynthesis; chorismate from D-erythrose 4-phosphate and phosphoenolpyruvate: step 2/7. In terms of biological role, catalyzes the conversion of 3-deoxy-D-arabino-heptulosonate 7-phosphate (DAHP) to dehydroquinate (DHQ). The sequence is that of 3-dehydroquinate synthase from Cyanothece sp. (strain PCC 7425 / ATCC 29141).